A 259-amino-acid polypeptide reads, in one-letter code: Ribosomal RNA small subunit methyltransferase J (259 aa).

Residues 101-102, 117-118, 153-154, and D176 contribute to the S-adenosyl-L-methionine site; these read RD, ER, and SS.

This sequence belongs to the methyltransferase superfamily. RsmJ family.

Its subcellular location is the cytoplasm. The catalysed reaction is guanosine(1516) in 16S rRNA + S-adenosyl-L-methionine = N(2)-methylguanosine(1516) in 16S rRNA + S-adenosyl-L-homocysteine + H(+). Specifically methylates the guanosine in position 1516 of 16S rRNA. In Aliivibrio fischeri (strain ATCC 700601 / ES114) (Vibrio fischeri), this protein is Ribosomal RNA small subunit methyltransferase J.